Consider the following 147-residue polypeptide: Antiholin-like protein LrgA (147 aa).

A run of 4 helical transmembrane segments spans residues 12–32, 35–55, 74–94, and 98–118; these read PAHF…SKII, FMPI…VLLC, NIGL…GVIS, and FLII…TGYV.

It belongs to the CidA/LrgA family. LrgA subfamily.

The protein localises to the cell membrane. Inhibits the expression or activity of extracellular murein hydrolases by interacting, possibly with LrgB, with the holin-like proteins CidA and/or CidB. The LrgAB and CidAB proteins may affect the proton motive force of the membrane. May be involved in programmed cell death (PCD), possibly triggering PCD in response to antibiotics and environmental stresses. The polypeptide is Antiholin-like protein LrgA (Staphylococcus aureus (strain MSSA476)).